The chain runs to 101 residues: Interleukin-8 (101 aa).

Residues 1 to 22 form the signal peptide; sequence MNSKLAVALLATFLLSLTLCEA. Arg27 carries the citrulline modification. 2 disulfides stabilise this stretch: Cys34–Cys61 and Cys36–Cys77.

Belongs to the intercrine alpha (chemokine CxC) family. As to quaternary structure, homodimer. Interacts with TNFAIP6 (via Link domain); this interaction interferes with chemokine binding to glycosaminoglycans. Post-translationally, citrullination at Arg-27 prevents proteolysis, and dampens tissue inflammation, it also enhances leukocytosis, possibly through impaired chemokine clearance from the blood circulation.

Its subcellular location is the secreted. In terms of biological role, chemotactic factor that mediates inflammatory response by attracting neutrophils, basophils, and T-cells to clear pathogens and protect the host from infection. Also plays an important role in neutrophil activation. Released in response to an inflammatory stimulus, exerts its effect by binding to the G-protein-coupled receptors CXCR1 and CXCR2, primarily found in neutrophils, monocytes and endothelial cells. G-protein heterotrimer (alpha, beta, gamma subunits) constitutively binds to CXCR1/CXCR2 receptor and activation by IL8 leads to beta and gamma subunits release from Galpha (GNAI2 in neutrophils) and activation of several downstream signaling pathways including PI3K and MAPK pathways. The protein is Interleukin-8 (CXCL8) of Oryctolagus cuniculus (Rabbit).